Consider the following 377-residue polypeptide: MAEEVVVVAKFDYVAQQEQELDIKKNERLWLLDDSKSWWRVRNSMNKTGFVPSNYVERKNSARKASIVKNLKDTLGIGKVKRKPSVPDSASPADDSFVDPGERLYDLNMPAYVKFNYMAEREDELSLIKGTKVIVMEKCSDGWWRGSYNGQVGWFPSNYVTEEGDSPLGDHVGSLSEKLAAVVNNLNTGQVLHVVQALYPFSSSNDEELNFEKGDVMDVIEKPENDPEWWKCRKINGMVGLVPKNYVTVMQNNPLTSGLEPSPPQCDYIRPSLTGKFAGNPWYYGKVTRHQAEMALNERGHEGDFLIRDSESSPNDFSVSLKAQGKNKHFKVQLKETVYCIGQRKFSTMEELVEHYKKAPIFTSEQGEKLYLVKHLS.

Ala-2 carries the N-acetylalanine modification. The region spanning 2–61 is the SH3 1 domain; it reads AEEVVVVAKFDYVAQQEQELDIKKNERLWLLDDSKSWWRVRNSMNKTGFVPSNYVERKNS. Ser-85, Ser-89, Ser-91, and Ser-96 each carry phosphoserine. A Phosphotyrosine modification is found at Tyr-105. An SH3 2 domain is found at 106–165; it reads DLNMPAYVKFNYMAEREDELSLIKGTKVIVMEKCSDGWWRGSYNGQVGWFPSNYVTEEGD. Ser-166 is subject to Phosphoserine. The region spanning 190–252 is the SH3 3 domain; that stretch reads QVLHVVQALY…PKNYVTVMQN (63 aa). The region spanning 282–376 is the SH2 domain; that stretch reads WYYGKVTRHQ…GEKLYLVKHL (95 aa).

Interacts (via SH2 domain and SH3 domain 2) with EGFR. Interacts with PAK1 and SOS1. Interacts (via SH3 domains) with PKN2. Associates with BLNK, PLCG1, VAV1 and NCK1 in a B-cell antigen receptor-dependent fashion. Interacts with SOCS7. This interaction is required for nuclear import. Part of a complex containing PPP1R15B, PP1 and NCK1. Interacts with RALGPS1. Interacts with CAV2 (tyrosine phosphorylated form). Interacts with ADAM15. Interacts with FASLG. Directly interacts with RASA1. Interacts with isoform 4 of MINK1. Interacts with FLT1 (tyrosine phosphorylated). Interacts with KDR (tyrosine phosphorylated). Interacts (via SH2 domain) with EPHB1; activates the JUN cascade to regulate cell adhesion. Interacts with EPHA2. Interacts (via SH2 domain) with PDGFRB (tyrosine phosphorylated). Interacts with the inactive form of EIF2AK2/PKR. Interacts with PTPN1. Interacts with INSR/insulin receptor (in response to insulin stimulation); This interaction may mediate PTPN1 recruitment leading to INSR dephosphorylation. Interacts with IRS1. In terms of processing, phosphorylated on Ser and Tyr residues. Phosphorylated in response to activation of EGFR and FcERI. Phosphorylated by activated PDGFRB.

Its subcellular location is the cytoplasm. The protein localises to the endoplasmic reticulum. It localises to the nucleus. Adapter protein which associates with tyrosine-phosphorylated growth factor receptors, such as KDR and PDGFRB, or their cellular substrates. Maintains low levels of EIF2S1 phosphorylation by promoting its dephosphorylation by PP1. Plays a role in the DNA damage response, not in the detection of the damage by ATM/ATR, but for efficient activation of downstream effectors, such as that of CHEK2. Plays a role in ELK1-dependent transcriptional activation in response to activated Ras signaling. Modulates the activation of EIF2AK2/PKR by dsRNA. May play a role in cell adhesion and migration through interaction with ephrin receptors. This is SH2/SH3 adapter protein NCK1 (NCK1) from Homo sapiens (Human).